The chain runs to 465 residues: Putative F-box/FBD/LRR-repeat protein At1g22000 (465 aa).

Residues 28–74 (ETRICALPDDLLLQILPHVPTKEAVATSILSKQWRYVWLMLPKLEFK) form the F-box domain. 5 LRR repeats span residues 154–181 (CLTL…SLHY), 182–207 (VVYK…SVHS), 210–230 (DDNL…NYDE), 248–273 (NEVE…HLSE), and 339–365 (ISLV…TIDN). The FBD domain maps to 373-424 (SWNQPSSIPGCLLSHLETFRWRGYGGREDAKKLLMTYILANSKCLKTVEISL).

This Arabidopsis thaliana (Mouse-ear cress) protein is Putative F-box/FBD/LRR-repeat protein At1g22000.